Consider the following 504-residue polypeptide: Putative F-box/FBD/LRR-repeat protein At3g59240 (504 aa).

Residues Lys-7–Ser-60 form the F-box domain. LRR repeat units lie at residues His-69–Cys-95, Arg-145–Ser-171, Trp-173–Asp-198, Thr-286–Cys-312, Asp-329–Gly-354, Cys-369–Glu-396, and Asp-403–Tyr-428. Positions Ser-382–His-427 constitute an FBD domain.

The sequence is that of Putative F-box/FBD/LRR-repeat protein At3g59240 from Arabidopsis thaliana (Mouse-ear cress).